The chain runs to 169 residues: Keratin-associated protein 9-7 (169 aa).

17 consecutive repeat copies span residues 8 to 12 (CCQPT), 13 to 17 (CCRTT), 32 to 36 (CCQPS), 37 to 41 (CCVSS), 46 to 50 (CCHPT), 51 to 55 (CCQNT), 56 to 60 (CCRTT), 61 to 65 (CCQPT), 75 to 79 (CCSTP), 80 to 84 (CCQPI), 85 to 89 (CCGSS), 90 to 94 (CCGQT), 100 to 104 (CCQPS), 139 to 143 (CCRPA), 144 to 148 (CCETT), 149 to 153 (CCRTT), and 163 to 167 (CCQPA). The interval 8-167 (CCQPTCCRTT…TCVTSCCQPA (160 aa)) is 17 X 5 AA repeats of C-C-[VGSREQH]-[SQTPN]-[STPAI].

The protein belongs to the KRTAP type 9 family. As to quaternary structure, interacts with hair keratins.

Functionally, in the hair cortex, hair keratin intermediate filaments are embedded in an interfilamentous matrix, consisting of hair keratin-associated proteins (KRTAP), which are essential for the formation of a rigid and resistant hair shaft through their extensive disulfide bond cross-linking with abundant cysteine residues of hair keratins. The matrix proteins include the high-sulfur and high-glycine-tyrosine keratins. The sequence is that of Keratin-associated protein 9-7 from Homo sapiens (Human).